The sequence spans 699 residues: Nucleolar and coiled-body phosphoprotein 1 (699 aa).

One can recognise a LisH domain in the interval 10-42 (VPSDLYPLVLGFLRDNQLSEVANKFAKATGATQ). Position 33 is an N6-acetyllysine (lysine 33). Positions 65–637 (ERKLQANGPV…VREEEIEVDS (573 aa)) are disordered. Glycyl lysine isopeptide (Lys-Gly) (interchain with G-Cter in SUMO2) cross-links involve residues lysine 67 and lysine 76. The stretch at 84–95 (SSDSEDSSEEEE) is one Acidic serine cluster 1 repeat. Residues 84–566 (SSDSEDSSEE…GKAAKNSEEE (483 aa)) are 11 X 12 AA approximate repeats of an acidic serine cluster. Residues 86–97 (DSEDSSEEEEEV) show a composition bias toward acidic residues. Serine 87, serine 90, and serine 91 each carry phosphoserine. Serine 91 carries the post-translational modification Diphosphoserine. Residues 100 to 110 (PPAKKAAVPAK) show a composition bias toward low complexity. The Acidic serine cluster 2 repeat unit spans residues 125 to 136 (ESSSSEESSDDD). Over residues 144 to 159 (QPVQKGVKPQAKAAKA) the composition is skewed to low complexity. The Acidic serine cluster 3 repeat unit spans residues 167–178 (SDSDSDSSSEDE). Lysine 186 participates in a covalent cross-link: Glycyl lysine isopeptide (Lys-Gly) (interchain with G-Cter in SUMO2). Threonine 188 is modified (phosphothreonine). Lysine 193 participates in a covalent cross-link: Glycyl lysine isopeptide (Lys-Gly) (interchain with G-Cter in SUMO2). Low complexity-rich tracts occupy residues 193-227 (KAQT…SSSS) and 236-261 (AATP…TTPT). The tract at residues 204–382 (RAAPKIANGK…DDEAPSKPAG (179 aa)) is interaction with RPA194. One copy of the Acidic serine cluster 4 repeat lies at 221–232 (SSSSSSSDDSEE). The Acidic serine cluster 5 repeat unit spans residues 264 to 275 (SSSSEDSSSDEE). Over residues 291-301 (SVPPPSAPPPK) the composition is skewed to pro residues. Over residues 321 to 333 (SSEDSSDESDSSS) the composition is skewed to acidic residues. The stretch at 325–336 (SSDESDSSSEEE) is one Acidic serine cluster 6 repeat. Residues lysine 342 and lysine 347 each participate in a glycyl lysine isopeptide (Lys-Gly) (interchain with G-Cter in SUMO2) cross-link. Residues serine 362, serine 363, and serine 366 each carry the phosphoserine modification. The Acidic serine cluster 7 repeat unit spans residues 363–375 (SDSSDSDSSEDDE). A compositionally biased stretch (acidic residues) spans 366-375 (SDSDSSEDDE). The segment covering 381-397 (AGTTKNSSNKPAVTTKS) has biased composition (polar residues). Residues lysine 390 and lysine 396 each participate in a glycyl lysine isopeptide (Lys-Gly) (interchain with G-Cter in SUMO2) cross-link. Serine 397 is subject to Phosphoserine. Over residues 398–409 (PAVKPAAAPKQP) the composition is skewed to low complexity. Residues lysine 401 and lysine 407 each participate in a glycyl lysine isopeptide (Lys-Gly) (interchain with G-Cter in SUMO2) cross-link. N6-acetyllysine; alternate is present on lysine 415. Lysine 415 is covalently cross-linked (Glycyl lysine isopeptide (Lys-Gly) (interchain with G-Cter in SUMO1); alternate). A Glycyl lysine isopeptide (Lys-Gly) (interchain with G-Cter in SUMO2); alternate cross-link involves residue lysine 415. An Acidic serine cluster 8 repeat occupies 425–436 (SSEEESSSSEEE). Residues lysine 440 and lysine 452 each participate in a glycyl lysine isopeptide (Lys-Gly) (interchain with G-Cter in SUMO2) cross-link. 2 stretches are compositionally biased toward low complexity: residues 441 to 476 (MVAT…SDSS) and 498 to 523 (AGGA…SSSD). Residue serine 456 is modified to Phosphoserine. The Acidic serine cluster 9 repeat unit spans residues 470–481 (SSDSDSSSSEEE). Residue lysine 505 forms a Glycyl lysine isopeptide (Lys-Gly) (interchain with G-Cter in SUMO2) linkage. A Phosphoserine modification is found at serine 508. Residues 519–529 (SSSSDDSSEEE) form an Acidic serine cluster 10 repeat. A Phosphoserine modification is found at serine 538. Positions 547-556 (NGTSALTAQN) are enriched in polar residues. Residues 555 to 566 (QNGKAAKNSEEE) form an Acidic serine cluster 11 repeat. At serine 563 the chain carries Phosphoserine. A Glycyl lysine isopeptide (Lys-Gly) (interchain with G-Cter in SUMO1) cross-link involves residue lysine 572. A Glycyl lysine isopeptide (Lys-Gly) (interchain with G-Cter in SUMO2) cross-link involves residue lysine 579. 2 positions are modified to phosphoserine: serine 580 and serine 582. A Glycyl lysine isopeptide (Lys-Gly) (interchain with G-Cter in SUMO2) cross-link involves residue lysine 604. A phosphothreonine mark is found at threonine 607 and threonine 610. Lysine 613 participates in a covalent cross-link: Glycyl lysine isopeptide (Lys-Gly) (interchain with G-Cter in SUMO2). At serine 622 the chain carries Phosphoserine. The span at 627–637 (RVREEEIEVDS) shows a compositional bias: basic and acidic residues. Serine 643 is subject to Phosphoserine. A Glycyl lysine isopeptide (Lys-Gly) (interchain with G-Cter in SUMO2) cross-link involves residue lysine 647. Lysine 663 is subject to N6-acetyllysine; alternate. Residue lysine 663 forms a Glycyl lysine isopeptide (Lys-Gly) (interchain with G-Cter in SUMO2); alternate linkage. Omega-N-methylarginine is present on arginine 683. Phosphoserine is present on serine 686. A Glycyl lysine isopeptide (Lys-Gly) (interchain with G-Cter in SUMO2) cross-link involves residue lysine 695. Phosphoserine is present on serine 698.

It belongs to the NOLC1 family. Heterodimer; heterodimerizes with TCOF1 following monoubiquitination. Interacts with RNA polymerase I 194 kDa subunit (RPA194) and with casein kinase-II. Interacts with DKC1/NAP57, NOP58 and fibrillarin. Undergoes rapid and massive phosphorylation/dephosphorylation cycles on CK2 and PKC sites. NOLC1 is one of the mostly phosphorylated proteins in the cell. In terms of processing, ubiquitinated. Monoubiquitination by the BCR(KBTBD8) complex promotes the formation of a NOLC1-TCOF1 complex that acts as a platform to connect RNA polymerase I with enzymes responsible for ribosomal processing and modification, leading to remodel the translational program of differentiating cells in favor of neural crest specification. Post-translationally, pyrophosphorylated by 5-diphosphoinositol pentakisphosphate (5-IP7). Serine pyrophosphorylation is achieved by Mg(2+)-dependent, but enzyme independent transfer of a beta-phosphate from a inositol pyrophosphate to a pre-phosphorylated serine residue.

The protein localises to the nucleus. It is found in the nucleolus. Its subcellular location is the cytoplasm. Its function is as follows. Nucleolar protein that acts as a regulator of RNA polymerase I by connecting RNA polymerase I with enzymes responsible for ribosomal processing and modification. Required for neural crest specification: following monoubiquitination by the BCR(KBTBD8) complex, associates with TCOF1 and acts as a platform to connect RNA polymerase I with enzymes responsible for ribosomal processing and modification, leading to remodel the translational program of differentiating cells in favor of neural crest specification. Involved in nucleologenesis, possibly by playing a role in the maintenance of the fundamental structure of the fibrillar center and dense fibrillar component in the nucleolus. It has intrinsic GTPase and ATPase activities. The chain is Nucleolar and coiled-body phosphoprotein 1 from Homo sapiens (Human).